The primary structure comprises 490 residues: Inosine-5'-monophosphate dehydrogenase (490 aa).

2 consecutive CBS domains span residues 96 to 154 (MIIN…SKPV) and 158 to 218 (MTKE…CKDE). Residues Asp-252 and 302 to 304 (GVG) contribute to the NAD(+) site. K(+)-binding residues include Gly-304 and Gly-306. IMP is bound at residue Ser-307. Cys-309 contacts K(+). The active-site Thioimidate intermediate is the Cys-309. Residues 342–344 (DGG), 365–366 (GN), and 389–393 (YRGMG) each bind IMP. Arg-406 serves as the catalytic Proton acceptor. Glu-418 serves as a coordination point for IMP. The K(+) site is built by Glu-472, Ser-473, and His-474.

It belongs to the IMPDH/GMPR family. In terms of assembly, homotetramer. K(+) serves as cofactor.

It catalyses the reaction IMP + NAD(+) + H2O = XMP + NADH + H(+). The protein operates within purine metabolism; XMP biosynthesis via de novo pathway; XMP from IMP: step 1/1. Its activity is regulated as follows. Mycophenolic acid (MPA) is a non-competitive inhibitor that prevents formation of the closed enzyme conformation by binding to the same site as the amobile flap. In contrast, mizoribine monophosphate (MZP) is a competitive inhibitor that induces the closed conformation. MPA is a potent inhibitor of mammalian IMPDHs but a poor inhibitor of the bacterial enzymes. MZP is a more potent inhibitor of bacterial IMPDH. Catalyzes the conversion of inosine 5'-phosphate (IMP) to xanthosine 5'-phosphate (XMP), the first committed and rate-limiting step in the de novo synthesis of guanine nucleotides, and therefore plays an important role in the regulation of cell growth. The protein is Inosine-5'-monophosphate dehydrogenase of Aquifex aeolicus (strain VF5).